The chain runs to 162 residues: Transcription antitermination protein NusB (162 aa).

Belongs to the NusB family.

Functionally, involved in transcription antitermination. Required for transcription of ribosomal RNA (rRNA) genes. Binds specifically to the boxA antiterminator sequence of the ribosomal RNA (rrn) operons. This chain is Transcription antitermination protein NusB, found in Mycobacterium sp. (strain JLS).